The chain runs to 501 residues: MSALRRKFGDDYQVVTTSSSGSGLQPQGPGQGPQQQLVPKKKRQRFVDKNGRCNVQHGNLGSETSRYLSDLFTTLVDLKWRWNLFIFILTYTVAWLFMASMWWVIAYTRGDLNKAHVGNYTPCVANVYNFPSAFLFFIETEATIGYGYRYITDKCPEGIILFLFQSILGSIVDAFLIGCMFIKMSQPKKRAETLMFSEHAVISMRDGKLTLMFRVGNLRNSHMVSAQIRCKLLKSRQTPEGEFLPLDQLELDVGFSTGADQLFLVSPLTICHVIDAKSPFYDLSQRSMQTEQFEVVVILEGIVETTGMTCQARTSYTEDEVLWGHRFFPVISLEEGFFKVDYSQFHATFEVPTPPYSVKEQEEMLLMSSPLIAPAITNSKERHNSVECLDGLDDISTKLPSKLQKITGREDFPKKLLRMSSTTSEKAYSLGDLPMKLQRISSVPGNSEEKLVSKTTKMLSDPMSQSVADLPPKLQKMAGGPTRMEGNLPAKLRKMNSDRFT.

Residues 1–40 (MSALRRKFGDDYQVVTTSSSGSGLQPQGPGQGPQQQLVPK) are disordered. Residues 1 to 80 (MSALRRKFGD…LFTTLVDLKW (80 aa)) are Cytoplasmic-facing. Over residues 18–37 (SSSGSGLQPQGPGQGPQQQL) the composition is skewed to low complexity. Residues 81–105 (RWNLFIFILTYTVAWLFMASMWWVI) traverse the membrane as a helical segment. Residues 106–129 (AYTRGDLNKAHVGNYTPCVANVYN) lie on the Extracellular side of the membrane. N119 carries N-linked (GlcNAc...) asparagine glycosylation. Positions 130 to 141 (FPSAFLFFIETE) form an intramembrane region, helical; Pore-forming. Residues 142-148 (ATIGYGY) constitute an intramembrane region (pore-forming). The Selectivity filter motif lies at 143–148 (TIGYGY). At 149–157 (RYITDKCPE) the chain is on the extracellular side. The chain crosses the membrane as a helical span at residues 158–179 (GIILFLFQSILGSIVDAFLIGC). Residues 180 to 501 (MFIKMSQPKK…LRKMNSDRFT (322 aa)) lie on the Cytoplasmic side of the membrane. Residues 182–209 (IKMSQPKKRAETLMFSEHAVISMRDGKL) form a polyphosphoinositide (PIP2)-binding region. Phosphoserine is present on residues S385 and S424. The span at 456–467 (TKMLSDPMSQSV) shows a compositional bias: polar residues. The tract at residues 456–501 (TKMLSDPMSQSVADLPPKLQKMAGGPTRMEGNLPAKLRKMNSDRFT) is disordered.

It belongs to the inward rectifier-type potassium channel (TC 1.A.2.1) family. KCNJ3 subfamily. As to quaternary structure, associates with KCNJ5/GIRK4 or KCNJ6/GIRK2 to form a G-protein activated heteromultimer pore-forming unit. The resulting inward current is much larger. Associates with KCNJ9/GIRK3 to form a G-protein activated heteromultimer pore-forming unit.

The protein localises to the membrane. It catalyses the reaction K(+)(in) = K(+)(out). With respect to regulation, heteromultimer composed of KCNJ3/GIRK1 and KCNJ5/GIRK4 is activated by phosphatidylinositol 4,5 biphosphate (PtdIns(4,5)P2). Functionally, inward rectifier potassium channels are characterized by a greater tendency to allow potassium to flow into the cell rather than out of it. Their voltage dependence is regulated by the concentration of extracellular potassium; as external potassium is raised, the voltage range of the channel opening shifts to more positive voltages. The inward rectification is mainly due to the blockage of outward current by internal magnesium. This potassium channel is controlled by G proteins. This receptor plays a crucial role in regulating the heartbeat. Forms a functional channel in association with KCNJ9/GIRK3. This Rattus norvegicus (Rat) protein is G protein-activated inward rectifier potassium channel 1 (Kcnj3).